Consider the following 332-residue polypeptide: DNA-directed RNA polymerase subunit alpha (332 aa).

An alpha N-terminal domain (alpha-NTD) region spans residues 1–234; that stretch reads MTVTVSQVLR…DQLSVFGDFT (234 aa). Positions 248-332 are alpha C-terminal domain (alpha-CTD); sequence VDPVLLRPID…PGVSQYGMLG (85 aa).

Belongs to the RNA polymerase alpha chain family. In terms of assembly, homodimer. The RNAP catalytic core consists of 2 alpha, 1 beta, 1 beta' and 1 omega subunit. When a sigma factor is associated with the core the holoenzyme is formed, which can initiate transcription.

It carries out the reaction RNA(n) + a ribonucleoside 5'-triphosphate = RNA(n+1) + diphosphate. In terms of biological role, DNA-dependent RNA polymerase catalyzes the transcription of DNA into RNA using the four ribonucleoside triphosphates as substrates. This chain is DNA-directed RNA polymerase subunit alpha, found in Xylella fastidiosa (strain M23).